The following is a 159-amino-acid chain: Ribosomal RNA large subunit methyltransferase H (159 aa).

Residues I76, G108, and 127–132 (FSKMTF) contribute to the S-adenosyl-L-methionine site.

The protein belongs to the RNA methyltransferase RlmH family. In terms of assembly, homodimer.

The protein localises to the cytoplasm. The enzyme catalyses pseudouridine(1915) in 23S rRNA + S-adenosyl-L-methionine = N(3)-methylpseudouridine(1915) in 23S rRNA + S-adenosyl-L-homocysteine + H(+). In terms of biological role, specifically methylates the pseudouridine at position 1915 (m3Psi1915) in 23S rRNA. This is Ribosomal RNA large subunit methyltransferase H from Clostridium botulinum (strain Loch Maree / Type A3).